Consider the following 321-residue polypeptide: Aspartate carbamoyltransferase catalytic subunit (321 aa).

The carbamoyl phosphate site is built by Arg60 and Thr61. Lys88 is an L-aspartate binding site. 3 residues coordinate carbamoyl phosphate: Arg110, His138, and Gln141. L-aspartate-binding residues include Arg171 and Arg225. Carbamoyl phosphate contacts are provided by Gly266 and Pro267.

Belongs to the aspartate/ornithine carbamoyltransferase superfamily. ATCase family. As to quaternary structure, heterododecamer (2C3:3R2) of six catalytic PyrB chains organized as two trimers (C3), and six regulatory PyrI chains organized as three dimers (R2).

The catalysed reaction is carbamoyl phosphate + L-aspartate = N-carbamoyl-L-aspartate + phosphate + H(+). The protein operates within pyrimidine metabolism; UMP biosynthesis via de novo pathway; (S)-dihydroorotate from bicarbonate: step 2/3. In terms of biological role, catalyzes the condensation of carbamoyl phosphate and aspartate to form carbamoyl aspartate and inorganic phosphate, the committed step in the de novo pyrimidine nucleotide biosynthesis pathway. The sequence is that of Aspartate carbamoyltransferase catalytic subunit from Sorangium cellulosum (strain So ce56) (Polyangium cellulosum (strain So ce56)).